A 924-amino-acid chain; its full sequence is MMPKRFNTSGFDTTLRLPSYYGFLHLTQSLTLNSRVFYGARHVTPPAIRIGSNPVQSLLLFRAPTQLTGWNRSSRDLLGRRVSFSDRSDGVDLLSSSPILSTNPNLDDSLTVIALPLPHKPLIPGFYMPIHVKDPKVLAALQESTRQQSPYVGAFLLKDCASTDSSSRSETEDNVVEKFKVKGKPKKKRRKELLNRIHQVGTLAQISSIQGEQVILVGRRRLIIEEMVSEDPLTVRVDHLKDKPYDKDNAVIKASYVEVISTLREVLKTNSLWRDQDIGDFSYQHLADFGAGISGANKHKNQGVLTELDVHKRLELTLELVKKQVEINKIKETDDGSSLSAKIRVRIDTKRDKIPKHVIKVMEEEFTKLEMLEENYSDFDLTYNYLHWLTVLPWGNFSYENFDVLRAKKILDEDHYGLSDVKERILEFIAVGRLRGTSQGKIICLSGPPGVGKTSIGRSIARALDRKFFRFSVGGLSDVAEIKGHCQTYVGAMPGKMVQCLKSVGTANPLILFDEIDKLGRCHTGDPASALLEVMDPEQNAKFLDHFLNVTIDLSKVLFVCTANVIEMIPGPLLDRMEVIDLSGYVTDEKMHIARDYLVKKTCRDCGIKPEHVDLSDAALLSLIENYCREAGVRNLQKQIEKIYRKVALELVRQGAVSFDVTDTKDTKSLAKTDSEVKRMKVADIMKILESATGDSTESKTKQSGLVAKTFEKVMIDESNLADYVGKPVFQEEKIYEQTPVGVVMGLAWTSMGGSTLYIETTFVEEGLGKGGLHITGQLGDVMKESAQIAHTVARRIMFEKEPENLFFANSKLHLHVPEGATPKDGPSAGCTMITSFLSLAMKKLVRKDLAMTGEVTLTGRILPIGGVKEKTIAARRSQIKTIIFPEANRRDFEELAENMKEGLDVHFVDEYEKIFDLAFNYDH.

A mitochondrion-targeting transit peptide spans 1–63 (MMPKRFNTSG…PVQSLLLFRA (63 aa)). In terms of domain architecture, Lon N-terminal spans 112-325 (VIALPLPHKP…LTLELVKKQV (214 aa)). 447-454 (GPPGVGKT) contributes to the ATP binding site. One can recognise a Lon proteolytic domain in the interval 738-922 (QTPVGVVMGL…EKIFDLAFNY (185 aa)). Catalysis depends on residues serine 828 and lysine 871.

This sequence belongs to the peptidase S16 family. Homohexamer or homoheptamer. Organized in a ring with a central cavity.

Its subcellular location is the mitochondrion matrix. It carries out the reaction Hydrolysis of proteins in presence of ATP.. In terms of biological role, ATP-dependent serine protease that mediates the selective degradation of misfolded, unassembled or oxidatively damaged polypeptides as well as certain short-lived regulatory proteins in the mitochondrial matrix. May also have a chaperone function in the assembly of inner membrane protein complexes. Participates in the regulation of mitochondrial gene expression and in the maintenance of the integrity of the mitochondrial genome. Binds to mitochondrial DNA in a site-specific manner. The sequence is that of Lon protease homolog 3, mitochondrial (LON3) from Arabidopsis thaliana (Mouse-ear cress).